The chain runs to 813 residues: Tax1-binding protein 1 homolog (813 aa).

A phosphoserine mark is found at Ser-124, Ser-138, and Ser-225. Residues Thr-144–Asp-596 are a coiled coil. Residues Glu-320–Asp-420 are oligomerization. At Ser-618 the chain carries Phosphoserine; by IKKA. A Phosphoserine modification is found at Ser-631. A disordered region spans residues Ala-667–Asn-732. Ser-692 is modified (phosphoserine; by IKKA). UBZ1-type zinc fingers lie at residues His-751–His-777 and Trp-778–His-804. Zn(2+) is bound by residues Cys-754, Cys-757, His-773, His-777, Cys-781, Cys-784, His-800, and His-804.

Homooligomer. Interacts with TNFAIP3. Interacts with STARD13. Interacts with MYO6. Interacts with TOM1; the interaction is indirect and is mediated by MYO6, which acts as a bridge between TOM1 and TAX1BP1. Interacts with MAVS; this interaction induces MAVS polyubiquitination. Interacts with TNIP1. Interacts with TRAF6; this interaction mediates deubiquitination of TRAF6 and inhibition of NF-kappa-B activation. Interacts with RIPK1; this interaction negatively regulates RIPK1 ubiquitination. Interacts with NBR1. Interacts with TBK1. Interacts with RB1CC1. Interacts with SQSTM1. Interacts with AZI2. Interacts with TICAM1 and TRIM32; these interactions target TICAM1 to TAX1BP1-mediated selective autophagic degradation. Phosphorylated in the C-terminal region by CHUK/IKKA leading to NF-kappa-B signaling down-regulation.

The protein resides in the cytoplasm. It localises to the mitochondrion. The protein localises to the preautophagosomal structure. Its subcellular location is the cytoplasmic vesicle. It is found in the autophagosome. In terms of biological role, ubiquitin-binding adapter that participates in inflammatory, antiviral and innate immune processes as well as selective autophagy regulation. Plays a key role in the negative regulation of NF-kappa-B and IRF3 signalings by acting as an adapter for the ubiquitin-editing enzyme A20/TNFAIP3 to bind and inactivate its substrates. Disrupts the interactions between the E3 ubiquitin ligase TRAF3 and TBK1/IKBKE to attenuate 'Lys63'-linked polyubiquitination of TBK1 and thereby IFN-beta production. Also recruits A20/TNFAIP3 to ubiquitinated signaling proteins TRAF6 and RIPK1, leading to their deubiquitination and disruption of IL-1 and TNF-induced NF-kappa-B signaling pathways. Inhibits virus-induced apoptosis by inducing the 'Lys-48'-linked polyubiquitination and degradation of MAVS via recruitment of the E3 ligase ITCH, thereby attenuating MAVS-mediated apoptosis signaling. As a macroautophagy/autophagy receptor, facilitates the xenophagic clearance of pathogenic bacteria such as Salmonella typhimurium and Mycobacterium tuberculosis. Upon NBR1 recruitment to the SQSTM1-ubiquitin condensates, acts as the major recruiter of RB1CC1 to these ubiquitin condensates to promote their autophagic degradation. Mediates the autophagic degradation of other substrates including TICAM1. The sequence is that of Tax1-binding protein 1 homolog (Tax1bp1) from Rattus norvegicus (Rat).